Consider the following 304-residue polypeptide: Glutaminase (304 aa).

Substrate is bound by residues Ser63, Asn114, Glu158, Asn165, Tyr189, Tyr240, and Val258.

It belongs to the glutaminase family. Homotetramer.

It catalyses the reaction L-glutamine + H2O = L-glutamate + NH4(+). This Shewanella baltica (strain OS185) protein is Glutaminase.